The following is a 186-amino-acid chain: Protein GrpE (186 aa).

Belongs to the GrpE family. As to quaternary structure, homodimer.

The protein localises to the cytoplasm. Its function is as follows. Participates actively in the response to hyperosmotic and heat shock by preventing the aggregation of stress-denatured proteins, in association with DnaK and GrpE. It is the nucleotide exchange factor for DnaK and may function as a thermosensor. Unfolded proteins bind initially to DnaJ; upon interaction with the DnaJ-bound protein, DnaK hydrolyzes its bound ATP, resulting in the formation of a stable complex. GrpE releases ADP from DnaK; ATP binding to DnaK triggers the release of the substrate protein, thus completing the reaction cycle. Several rounds of ATP-dependent interactions between DnaJ, DnaK and GrpE are required for fully efficient folding. The chain is Protein GrpE from Novosphingobium aromaticivorans (strain ATCC 700278 / DSM 12444 / CCUG 56034 / CIP 105152 / NBRC 16084 / F199).